The following is a 157-amino-acid chain: ATP synthase subunit b (157 aa).

A helical transmembrane segment spans residues 7–29; that stretch reads LVSQAIAFSIFIWFTTKFVWPYL.

This sequence belongs to the ATPase B chain family. As to quaternary structure, F-type ATPases have 2 components, F(1) - the catalytic core - and F(0) - the membrane proton channel. F(1) has five subunits: alpha(3), beta(3), gamma(1), delta(1), epsilon(1). F(0) has three main subunits: a(1), b(2) and c(10-14). The alpha and beta chains form an alternating ring which encloses part of the gamma chain. F(1) is attached to F(0) by a central stalk formed by the gamma and epsilon chains, while a peripheral stalk is formed by the delta and b chains.

It localises to the cell inner membrane. F(1)F(0) ATP synthase produces ATP from ADP in the presence of a proton or sodium gradient. F-type ATPases consist of two structural domains, F(1) containing the extramembraneous catalytic core and F(0) containing the membrane proton channel, linked together by a central stalk and a peripheral stalk. During catalysis, ATP synthesis in the catalytic domain of F(1) is coupled via a rotary mechanism of the central stalk subunits to proton translocation. Functionally, component of the F(0) channel, it forms part of the peripheral stalk, linking F(1) to F(0). In Nitrosomonas eutropha (strain DSM 101675 / C91 / Nm57), this protein is ATP synthase subunit b.